We begin with the raw amino-acid sequence, 396 residues long: Phosphopentomutase (396 aa).

The Mn(2+) site is built by aspartate 13, aspartate 288, histidine 293, aspartate 329, histidine 330, and histidine 341.

Belongs to the phosphopentomutase family. Mn(2+) serves as cofactor.

The protein resides in the cytoplasm. It carries out the reaction 2-deoxy-alpha-D-ribose 1-phosphate = 2-deoxy-D-ribose 5-phosphate. The enzyme catalyses alpha-D-ribose 1-phosphate = D-ribose 5-phosphate. The protein operates within carbohydrate degradation; 2-deoxy-D-ribose 1-phosphate degradation; D-glyceraldehyde 3-phosphate and acetaldehyde from 2-deoxy-alpha-D-ribose 1-phosphate: step 1/2. Functionally, isomerase that catalyzes the conversion of deoxy-ribose 1-phosphate (dRib-1-P) and ribose 1-phosphate (Rib-1-P) to deoxy-ribose 5-phosphate (dRib-5-P) and ribose 5-phosphate (Rib-5-P), respectively. This is Phosphopentomutase from Clostridium perfringens (strain ATCC 13124 / DSM 756 / JCM 1290 / NCIMB 6125 / NCTC 8237 / Type A).